Here is a 374-residue protein sequence, read N- to C-terminus: N-acetyldiaminopimelate deacetylase (374 aa).

Asp68 is a catalytic residue. Glu127 acts as the Proton acceptor in catalysis.

It belongs to the peptidase M20A family. N-acetyldiaminopimelate deacetylase subfamily.

The enzyme catalyses N-acetyl-(2S,6S)-2,6-diaminopimelate + H2O = (2S,6S)-2,6-diaminopimelate + acetate. Its pathway is amino-acid biosynthesis; L-lysine biosynthesis via DAP pathway; LL-2,6-diaminopimelate from (S)-tetrahydrodipicolinate (acetylase route): step 3/3. In terms of biological role, catalyzes the conversion of N-acetyl-diaminopimelate to diaminopimelate and acetate. This chain is N-acetyldiaminopimelate deacetylase, found in Shouchella clausii (strain KSM-K16) (Alkalihalobacillus clausii).